The primary structure comprises 599 residues: Elongation factor 4 (599 aa).

The 183-residue stretch at 2–184 folds into the tr-type G domain; that stretch reads KNIRNFSIIA…RLVRDIPPPE (183 aa). Residues 14 to 19 and 131 to 134 contribute to the GTP site; these read DHGKST and NKID.

It belongs to the TRAFAC class translation factor GTPase superfamily. Classic translation factor GTPase family. LepA subfamily.

The protein localises to the cell inner membrane. The catalysed reaction is GTP + H2O = GDP + phosphate + H(+). Functionally, required for accurate and efficient protein synthesis under certain stress conditions. May act as a fidelity factor of the translation reaction, by catalyzing a one-codon backward translocation of tRNAs on improperly translocated ribosomes. Back-translocation proceeds from a post-translocation (POST) complex to a pre-translocation (PRE) complex, thus giving elongation factor G a second chance to translocate the tRNAs correctly. Binds to ribosomes in a GTP-dependent manner. The sequence is that of Elongation factor 4 from Cronobacter sakazakii (strain ATCC BAA-894) (Enterobacter sakazakii).